The sequence spans 957 residues: Kinesin heavy chain isoform 5C (957 aa).

One can recognise a Kinesin motor domain in the interval 8-327 (SIKVMCRFRP…LMFGQRAKTI (320 aa)). Gln87, Ser89, Ser90, Gly91, Lys92, Thr93, His94, and Lys99 together coordinate ATP. Positions 174–315 (VSSPEEVMDV…PSVFNEAETK (142 aa)) are microtubule-binding. Residues 406 to 923 (VAGISTEEKE…ARRAHSAQIA (518 aa)) adopt a coiled-coil conformation. Positions 859–956 (RCELPKLEKR…GSSSNSTHYQ (98 aa)) are globular. Residues 911–957 (KNMARRAHSAQIAKPIRPGHYPASSPTAVHAIRGGGGSSSNSTHYQK) form a disordered region.

This sequence belongs to the TRAFAC class myosin-kinesin ATPase superfamily. Kinesin family. Kinesin subfamily. Oligomer composed of two heavy chains and two light chains. Interacts with GRIP1 and KLC3. Interacts with TRAK1. Interacts with ZFYVE27. In terms of tissue distribution, highest expression in brain, prostate and testis, and moderate expression in kidney, small intestine and ovary.

It is found in the cytoplasm. Its subcellular location is the cytoskeleton. The protein resides in the cell projection. The protein localises to the dendrite. The catalysed reaction is ATP + H2O = ADP + phosphate + H(+). Functionally, microtubule-associated force-producing protein that may play a role in organelle transport. Has ATPase activity. Involved in synaptic transmission. Mediates dendritic trafficking of mRNAs. Required for anterograde axonal transportation of MAPK8IP3/JIP3 which is essential for MAPK8IP3/JIP3 function in axon elongation. This chain is Kinesin heavy chain isoform 5C (KIF5C), found in Homo sapiens (Human).